The sequence spans 162 residues: Regulator of sigma D (162 aa).

It belongs to the Rsd/AlgQ family. In terms of assembly, interacts with RpoD.

It localises to the cytoplasm. Its function is as follows. Binds RpoD and negatively regulates RpoD-mediated transcription activation by preventing the interaction between the primary sigma factor RpoD with the catalytic core of the RNA polymerase and with promoter DNA. May be involved in replacement of the RNA polymerase sigma subunit from RpoD to RpoS during the transition from exponential growth to the stationary phase. The polypeptide is Regulator of sigma D (Salmonella agona (strain SL483)).